We begin with the raw amino-acid sequence, 440 residues long: Proline--tRNA ligase (440 aa).

Belongs to the class-II aminoacyl-tRNA synthetase family. ProS type 2 subfamily. Homodimer.

The protein localises to the cytoplasm. The enzyme catalyses tRNA(Pro) + L-proline + ATP = L-prolyl-tRNA(Pro) + AMP + diphosphate. In terms of biological role, catalyzes the attachment of proline to tRNA(Pro) in a two-step reaction: proline is first activated by ATP to form Pro-AMP and then transferred to the acceptor end of tRNA(Pro). This Agrobacterium fabrum (strain C58 / ATCC 33970) (Agrobacterium tumefaciens (strain C58)) protein is Proline--tRNA ligase.